A 440-amino-acid chain; its full sequence is UDP-N-acetylmuramoylalanine--D-glutamate ligase (440 aa).

ATP is bound at residue 113-119 (GTNGKST).

It belongs to the MurCDEF family.

The protein localises to the cytoplasm. The catalysed reaction is UDP-N-acetyl-alpha-D-muramoyl-L-alanine + D-glutamate + ATP = UDP-N-acetyl-alpha-D-muramoyl-L-alanyl-D-glutamate + ADP + phosphate + H(+). Its pathway is cell wall biogenesis; peptidoglycan biosynthesis. Its function is as follows. Cell wall formation. Catalyzes the addition of glutamate to the nucleotide precursor UDP-N-acetylmuramoyl-L-alanine (UMA). This is UDP-N-acetylmuramoylalanine--D-glutamate ligase from Buchnera aphidicola subsp. Acyrthosiphon pisum (strain Tuc7).